A 193-amino-acid chain; its full sequence is Corrinoid adenosyltransferase (193 aa).

ATP-binding positions include 5 to 13, Lys-22, 130 to 135, and Asn-154; these read TKTGDKGQT and RRAERR.

Belongs to the Cob(I)alamin adenosyltransferase family. As to quaternary structure, homotrimer.

The protein resides in the cytoplasm. The catalysed reaction is 2 cob(II)yrinate a,c diamide + reduced [electron-transfer flavoprotein] + 2 ATP = 2 adenosylcob(III)yrinate a,c-diamide + 2 triphosphate + oxidized [electron-transfer flavoprotein] + 3 H(+). It catalyses the reaction 2 cob(II)alamin + reduced [electron-transfer flavoprotein] + 2 ATP = 2 adenosylcob(III)alamin + 2 triphosphate + oxidized [electron-transfer flavoprotein] + 3 H(+). The protein operates within cofactor biosynthesis; adenosylcobalamin biosynthesis; adenosylcobalamin from cob(II)yrinate a,c-diamide: step 2/7. The polypeptide is Corrinoid adenosyltransferase (yvqK) (Bacillus subtilis (strain 168)).